Consider the following 778-residue polypeptide: Lon protease (778 aa).

One can recognise a Lon N-terminal domain in the interval 8–202 (LPLIPLRGLI…NVLTVIKDEL (195 aa)). Residue 354-361 (GPPGVGKT) coordinates ATP. In terms of domain architecture, Lon proteolytic spans 591–772 (EDKIGVVTGM…DTVLENALIG (182 aa)). Residues S678 and K721 contribute to the active site.

The protein belongs to the peptidase S16 family. Homohexamer. Organized in a ring with a central cavity.

The protein localises to the cytoplasm. The catalysed reaction is Hydrolysis of proteins in presence of ATP.. Its function is as follows. ATP-dependent serine protease that mediates the selective degradation of mutant and abnormal proteins as well as certain short-lived regulatory proteins. Required for cellular homeostasis and for survival from DNA damage and developmental changes induced by stress. Degrades polypeptides processively to yield small peptide fragments that are 5 to 10 amino acids long. Binds to DNA in a double-stranded, site-specific manner. The protein is Lon protease of Clostridium acetobutylicum (strain ATCC 824 / DSM 792 / JCM 1419 / IAM 19013 / LMG 5710 / NBRC 13948 / NRRL B-527 / VKM B-1787 / 2291 / W).